The primary structure comprises 628 residues: Chaperone protein DnaK (628 aa).

A Phosphothreonine; by autocatalysis modification is found at threonine 197. The span at 595–604 (AEAMYKKEQG) shows a compositional bias: basic and acidic residues. The disordered stretch occupies residues 595–628 (AEAMYKKEQGEQAGAQPNQKAKKDDDDVIDAEVE).

The protein belongs to the heat shock protein 70 family.

Acts as a chaperone. The polypeptide is Chaperone protein DnaK (Aliarcobacter butzleri (strain RM4018) (Arcobacter butzleri)).